The sequence spans 212 residues: Protein-L-isoaspartate O-methyltransferase (212 aa).

Serine 60 is a catalytic residue.

The protein belongs to the methyltransferase superfamily. L-isoaspartyl/D-aspartyl protein methyltransferase family.

It is found in the cytoplasm. It carries out the reaction [protein]-L-isoaspartate + S-adenosyl-L-methionine = [protein]-L-isoaspartate alpha-methyl ester + S-adenosyl-L-homocysteine. Functionally, catalyzes the methyl esterification of L-isoaspartyl residues in peptides and proteins that result from spontaneous decomposition of normal L-aspartyl and L-asparaginyl residues. It plays a role in the repair and/or degradation of damaged proteins. This chain is Protein-L-isoaspartate O-methyltransferase, found in Methylorubrum populi (strain ATCC BAA-705 / NCIMB 13946 / BJ001) (Methylobacterium populi).